A 738-amino-acid chain; its full sequence is Prolyl oligopeptidase A (738 aa).

Residues Ser-581, Asp-665, and His-701 each act as charge relay system in the active site.

Belongs to the peptidase S9A family. In terms of assembly, monomer.

It carries out the reaction Hydrolysis of Pro-|-Xaa &gt;&gt; Ala-|-Xaa in oligopeptides.. Housekeeping prolyl oligopeptidase (POP) that behaves like a conventional POP by cleaving peptide bonds on the C-terminal side of prolyl residues within peptides that are up to approximately 30 amino acids long. This chain is Prolyl oligopeptidase A, found in Galerina marginata (strain CBS 339.88).